A 273-amino-acid polypeptide reads, in one-letter code: Phosphatidylglycerol--prolipoprotein diacylglyceryl transferase (273 aa).

7 helical membrane passes run 21–41 (ISVRWYGLMYLVGFMFALWLA), 60–80 (LLFAGFLGVVLGGRIGYVLFY), 95–115 (VWTGGMSFHGGLLGVITAMLW), 124–144 (FFGVADMIAPLVPFGLGMGRM), 176–196 (SQLYEMALEGIVLFFILNWFI), 203–223 (GSVSGLFLAGYGTFRFLVEYV), and 236–256 (FISMGQILSLPMVIIGVLMMV). Residue Arg143 coordinates a 1,2-diacyl-sn-glycero-3-phospho-(1'-sn-glycerol).

This sequence belongs to the Lgt family.

Its subcellular location is the cell inner membrane. It carries out the reaction L-cysteinyl-[prolipoprotein] + a 1,2-diacyl-sn-glycero-3-phospho-(1'-sn-glycerol) = an S-1,2-diacyl-sn-glyceryl-L-cysteinyl-[prolipoprotein] + sn-glycerol 1-phosphate + H(+). It participates in protein modification; lipoprotein biosynthesis (diacylglyceryl transfer). Its function is as follows. Catalyzes the transfer of the diacylglyceryl group from phosphatidylglycerol to the sulfhydryl group of the N-terminal cysteine of a prolipoprotein, the first step in the formation of mature lipoproteins. In Vibrio atlanticus (strain LGP32) (Vibrio splendidus (strain Mel32)), this protein is Phosphatidylglycerol--prolipoprotein diacylglyceryl transferase.